Reading from the N-terminus, the 132-residue chain is Large ribosomal subunit protein uL24 (132 aa).

Belongs to the universal ribosomal protein uL24 family. Part of the 50S ribosomal subunit.

Functionally, one of two assembly initiator proteins, it binds directly to the 5'-end of the 23S rRNA, where it nucleates assembly of the 50S subunit. In terms of biological role, one of the proteins that surrounds the polypeptide exit tunnel on the outside of the subunit. In Synechococcus sp. (strain JA-2-3B'a(2-13)) (Cyanobacteria bacterium Yellowstone B-Prime), this protein is Large ribosomal subunit protein uL24.